Reading from the N-terminus, the 101-residue chain is Small ribosomal subunit protein bS18c (101 aa).

Residues 1 to 19 are compositionally biased toward basic residues; sequence MDKSKQPFRKSKRSFRRRL. Residues 1–26 form a disordered region; that stretch reads MDKSKQPFRKSKRSFRRRLPPIGSGD.

The protein belongs to the bacterial ribosomal protein bS18 family. As to quaternary structure, part of the 30S ribosomal subunit.

The protein localises to the plastid. It is found in the chloroplast. In Phalaenopsis aphrodite subsp. formosana (Moth orchid), this protein is Small ribosomal subunit protein bS18c.